The sequence spans 1062 residues: Inversin (1062 aa).

16 ANK repeats span residues 13-42, 47-76, 80-110, 113-144, 148-177, 181-213, 220-250, 254-283, 288-317, 321-350, 356-385, 389-418, 422-451, 455-484, 488-517, and 523-553; these read SLAS…ALRD, FGRT…DVNK, SRRT…WMQK, EEMT…EVDT, NKQT…NIGI, EGKI…TESL, EGRT…NITS, LFRT…SGTI, QGAT…VKDD, EGRT…DIDI, YGGT…QVDA, MKHT…RVDL, DGHS…NPNV, AGRT…DPNI, EGRT…FPNQ, and ERYT…SIAA. Asn-75 is modified (3-hydroxyasparagine). The short motif at 490–498 is the D-box 1 element; it reads RTALHWSCN. In terms of domain architecture, IQ 1 spans 555–584; the sequence is QDIAAFKIQAVYKGYKVRKAFRDRKNLLMK. Residues 589–608 show a composition bias toward basic and acidic residues; it reads RKDAAAKKREEENKRKEAEQ. Positions 589–849 are disordered; sequence RKDAAAKKRE…QDKLIGGVSS (261 aa). 2 stretches are compositionally biased toward polar residues: residues 636–658 and 676–689; these read QNEG…TVQS and QGDS…TASR. Over residues 690–700 the composition is skewed to basic and acidic residues; sequence KPSETPIEHCR. Polar residues predominate over residues 713-724; it reads GGNSSKNQGTSS. Composition is skewed to basic and acidic residues over residues 725 to 741 and 775 to 788; these read VEKR…RCEE and DHPR…DRAA. The D-box 2 signature appears at 907-915; that stretch reads RKELFRRKN. An IQ 2 domain is found at 914–943; sequence KNKAAAVIQRAWRSYQLRKHLSRLLHLKQL. The segment at 1042–1062 is disordered; that stretch reads RSKKFSYNLQPSSQSKNKPKL. A compositionally biased stretch (polar residues) spans 1046 to 1062; that stretch reads FSYNLQPSSQSKNKPKL.

As to quaternary structure, interacts with microtubules. Interacts with NPHP1. Interacts with DVL1, PRICKLE (PRICKLE1 or PRICKLE2) and Strabismus (VANGL1 or VANGL2). Binds calmodulin via its IQ domains. Interacts with APC2. Interacts with alpha-, beta-, and gamma-catenin. Interacts with N-cadherin (CDH2). Interacts with NPHP3. Interacts with IQCB1; the interaction likely requires additional interactors. Component of a complex containing at least ANKS6, INVS, NEK8 and NPHP3. ANKS6 may organize complex assembly by linking INVS and NPHP3 to NEK8 and INVS may target the complex to the proximal ciliary axoneme. Post-translationally, may be ubiquitinated via its interaction with APC2. Hydroxylated at Asn-75, most probably by HIF1AN. Strongly expressed in the primary cilia of renal cells, especially in the varicosities, swellings observed in the cilia. Localizes in the node monocilia and in other 9+0 monocilia, including those of kidney epithelial cells and the pituitary gland, but it does not localize to 9+2 cilia (at protein level). In adult, it is expressed at high level in liver and kidney. Weakly or not expressed in other tissues.

The protein resides in the cytoplasm. Its subcellular location is the cytoskeleton. It is found in the membrane. It localises to the nucleus. The protein localises to the perinuclear region. The protein resides in the spindle. Required for normal renal development and establishment of left-right axis. Probably acts as a molecular switch between different Wnt signaling pathways. Inhibits the canonical Wnt pathway by targeting cytoplasmic disheveled (DVL1) for degradation by the ubiquitin-proteasome. This suggests that it is required in renal development to oppose the repression of terminal differentiation of tubular epithelial cells by Wnt signaling. Involved in the organization of apical junctions in kidney cells together with NPHP1, NPHP4 and RPGRIP1L/NPHP8. Does not seem to be strictly required for ciliogenesis. The protein is Inversin (Invs) of Mus musculus (Mouse).